The following is a 248-amino-acid chain: MQHPLEIGAHYYPPDAHLDQRSHRYRSFMIEEILTDHPDQKISSPTGDLLKFGVHALLSARPYHNHLVLKADQTGILKFPVSPLSCSLGAPLSSALLSGAAGLQVGSSSHHLPLDLHLRGKLDPGADAVSKTKKGRRSRTVFTELQLMGLEKRFEKQKYLSTPDRIDLAESLGLSQLQVKTWYQNRRMKWKKIVLQGGGLESPTKPKGRPKKNSIPTSEQLSEQERTREADRLSDGGASSLSDANQEE.

A DNA-binding region (homeobox) is located at residues 135 to 194 (GRRSRTVFTELQLMGLEKRFEKQKYLSTPDRIDLAESLGLSQLQVKTWYQNRRMKWKKIV). Residues 197-248 (GGGLESPTKPKGRPKKNSIPTSEQLSEQERTREADRLSDGGASSLSDANQEE) are disordered. The span at 223–234 (EQERTREADRLS) shows a compositional bias: basic and acidic residues. Residues 237–248 (GASSLSDANQEE) show a composition bias toward polar residues.

The protein belongs to the BAR homeobox family.

The protein resides in the nucleus. Transcription factor, is involved in craniofacial development, and in stomach organogenesis. The polypeptide is Homeobox protein BarH-like 1 (barx1) (Danio rerio (Zebrafish)).